Reading from the N-terminus, the 426-residue chain is 4-hydroxy-3-methylbut-2-en-1-yl diphosphate synthase (flavodoxin) (426 aa).

The [4Fe-4S] cluster site is built by Cys-320, Cys-323, Cys-366, and Glu-373.

It belongs to the IspG family. It depends on [4Fe-4S] cluster as a cofactor.

It carries out the reaction (2E)-4-hydroxy-3-methylbut-2-enyl diphosphate + oxidized [flavodoxin] + H2O + 2 H(+) = 2-C-methyl-D-erythritol 2,4-cyclic diphosphate + reduced [flavodoxin]. Its pathway is isoprenoid biosynthesis; isopentenyl diphosphate biosynthesis via DXP pathway; isopentenyl diphosphate from 1-deoxy-D-xylulose 5-phosphate: step 5/6. In terms of biological role, converts 2C-methyl-D-erythritol 2,4-cyclodiphosphate (ME-2,4cPP) into 1-hydroxy-2-methyl-2-(E)-butenyl 4-diphosphate. The polypeptide is 4-hydroxy-3-methylbut-2-en-1-yl diphosphate synthase (flavodoxin) (Wolbachia sp. subsp. Drosophila simulans (strain wRi)).